The chain runs to 502 residues: Alpha-globin transcription factor CP2 (502 aa).

A Grh/CP2 DB domain is found at 63-300 (EILPFQYVLC…SPGFNSSHSS (238 aa)). The DNA-binding stretch occupies residues 133–386 (EHQQLEGWRW…LFNALKGRMV (254 aa)). A compositionally biased stretch (basic and acidic residues) spans 241 to 265 (KGADRKQKIDREKMEKRTPHEKEKY). Disordered stretches follow at residues 241-268 (KGADRKQKIDREKMEKRTPHEKEKYQPS) and 294-326 (FNSSHSSFSLGEGNGSPNHQPEPPPPVTDNLLP). Residue Ser-353 is modified to Phosphoserine.

Belongs to the grh/CP2 family. CP2 subfamily. As to quaternary structure, binds to DNA as a dimer. Interacts with UBP1 and PIAS1, and is probably part of a complex containing TFCP2, UBP1 and PIAS1. Component of the SSP (stage selector protein) complex, which appears to be a heteromer of TFCP2 and 2 copies of NFE4.

Its subcellular location is the nucleus. In terms of biological role, binds a variety of cellular promoters including fibrinogen, alpha-globin promoters. Activation of the alpha-globin promoter in erythroid cells is via synergistic interaction with UBP1. Functions as part of the SSP (stage selector protein) complex. Facilitates the interaction of the gamma-globin genes with enhancer elements contained in the locus control region in fetal erythroid cells. Interacts by binding to the stage selector element (SSE) in the proximal gamma-globin promoter. The sequence is that of Alpha-globin transcription factor CP2 (Tfcp2) from Mus musculus (Mouse).